The following is a 340-amino-acid chain: CaiB/baiF CoA-transferase family protein ZK892.4 (340 aa).

Aspartate 154 (nucleophile) is an active-site residue.

Belongs to the CoA-transferase III family.

The sequence is that of CaiB/baiF CoA-transferase family protein ZK892.4 from Caenorhabditis elegans.